The primary structure comprises 389 residues: Lipid-A-disaccharide synthase (389 aa).

This sequence belongs to the LpxB family.

The enzyme catalyses a lipid X + a UDP-2-N,3-O-bis[(3R)-3-hydroxyacyl]-alpha-D-glucosamine = a lipid A disaccharide + UDP + H(+). The protein operates within bacterial outer membrane biogenesis; LPS lipid A biosynthesis. Its function is as follows. Condensation of UDP-2,3-diacylglucosamine and 2,3-diacylglucosamine-1-phosphate to form lipid A disaccharide, a precursor of lipid A, a phosphorylated glycolipid that anchors the lipopolysaccharide to the outer membrane of the cell. The polypeptide is Lipid-A-disaccharide synthase (Paraburkholderia phymatum (strain DSM 17167 / CIP 108236 / LMG 21445 / STM815) (Burkholderia phymatum)).